Here is a 170-residue protein sequence, read N- to C-terminus: ATP synthase F(1) complex subunit delta, mitochondrial (170 aa).

The transit peptide at 1–33 directs the protein to the mitochondrion; sequence MIRSIIKSSNNLLKSNVAINSNKRFFATEASAT.

It belongs to the ATPase epsilon chain family. As to quaternary structure, component of the ATP synthase complex composed at least of ATP5F1A/subunit alpha, ATP5F1B/subunit beta, ATP5MC1/subunit c (homooctomer), MT-ATP6/subunit a, MT-ATP8/subunit 8, ATP5ME/subunit e, ATP5MF/subunit f, ATP5MG/subunit g, ATP5MK/subunit k, ATP5MJ/subunit j, ATP5F1C/subunit gamma, ATP5F1D/subunit delta, ATP5F1E/subunit epsilon, ATP5PF/subunit F6, ATP5PB/subunit b, ATP5PD/subunit d, ATP5PO/subunit OSCP. ATP synthase complex consists of a soluble F(1) head domain (subunits alpha(3) and beta(3)) - the catalytic core - and a membrane F(0) domain - the membrane proton channel (subunits c, a, 8, e, f, g, k and j). These two domains are linked by a central stalk (subunits gamma, delta, and epsilon) rotating inside the F1 region and a stationary peripheral stalk (subunits F6, b, d, and OSCP).

It localises to the mitochondrion. The protein localises to the mitochondrion inner membrane. In terms of biological role, subunit delta, of the mitochondrial membrane ATP synthase complex (F(1)F(0) ATP synthase or Complex V) that produces ATP from ADP in the presence of a proton gradient across the membrane which is generated by electron transport complexes of the respiratory chain. ATP synthase complex consist of a soluble F(1) head domain - the catalytic core - and a membrane F(1) domain - the membrane proton channel. These two domains are linked by a central stalk rotating inside the F(1) region and a stationary peripheral stalk. During catalysis, ATP synthesis in the catalytic domain of F(1) is coupled via a rotary mechanism of the central stalk subunits to proton translocation. In vivo, can only synthesize ATP although its ATP hydrolase activity can be activated artificially in vitro. With the central stalk subunit gamma, is essential for the biogenesis of F(1) catalytic part of the ATP synthase complex namely in the formation of F1 assembly intermediate. The chain is ATP synthase F(1) complex subunit delta, mitochondrial from Dictyostelium discoideum (Social amoeba).